The primary structure comprises 206 residues: Small ribosomal subunit protein uS4 (206 aa).

The 61-residue stretch at 96 to 156 folds into the S4 RNA-binding domain; that stretch reads GRLDNVVYRM…EKSKKQARIK (61 aa).

It belongs to the universal ribosomal protein uS4 family. In terms of assembly, part of the 30S ribosomal subunit. Contacts protein S5. The interaction surface between S4 and S5 is involved in control of translational fidelity.

In terms of biological role, one of the primary rRNA binding proteins, it binds directly to 16S rRNA where it nucleates assembly of the body of the 30S subunit. With S5 and S12 plays an important role in translational accuracy. The sequence is that of Small ribosomal subunit protein uS4 from Actinobacillus succinogenes (strain ATCC 55618 / DSM 22257 / CCUG 43843 / 130Z).